A 120-amino-acid chain; its full sequence is Large ribosomal subunit protein uL18 (120 aa).

A compositionally biased stretch (basic and acidic residues) spans 1–10; sequence MSTPRKEQTQ. Positions 1–25 are disordered; it reads MSTPRKEQTQKRHRRLRRHLEGTPE.

This sequence belongs to the universal ribosomal protein uL18 family. In terms of assembly, part of the 50S ribosomal subunit; part of the 5S rRNA/L5/L18/L25 subcomplex. Contacts the 5S and 23S rRNAs.

This is one of the proteins that bind and probably mediate the attachment of the 5S RNA into the large ribosomal subunit, where it forms part of the central protuberance. This chain is Large ribosomal subunit protein uL18, found in Synechococcus sp. (strain RCC307).